The chain runs to 338 residues: Ferrochelatase (338 aa).

Fe cation contacts are provided by H202 and E283.

It belongs to the ferrochelatase family.

It localises to the cytoplasm. It catalyses the reaction heme b + 2 H(+) = protoporphyrin IX + Fe(2+). It functions in the pathway porphyrin-containing compound metabolism; protoheme biosynthesis; protoheme from protoporphyrin-IX: step 1/1. Catalyzes the ferrous insertion into protoporphyrin IX. The polypeptide is Ferrochelatase (Acinetobacter baumannii (strain AB307-0294)).